The primary structure comprises 707 residues: Choline transporter-like protein 4 (707 aa).

Over 1-32 (MGRKQNENEAHGNSAKYDPSFRGPIKNRGCTD) the chain is Cytoplasmic. A helical transmembrane segment spans residues 33-53 (IICCVLFLIFILGYIIVGLVA). Over 54 to 227 (WVYGDPRQVL…KIFEDFAQSW (174 aa)) the chain is Extracellular. N-linked (GlcNAc...) asparagine glycans are attached at residues Asn-67, Asn-185, Asn-195, and Asn-196. A helical membrane pass occupies residues 228-248 (YWILVALGVALALSLLFILLL). The Cytoplasmic segment spans residues 249-250 (RL). A helical membrane pass occupies residues 251 to 271 (VAAPLVLLLIVGVLAVLAYGI). The Extracellular portion of the chain corresponds to 272 to 307 (YHCWQQYQVFRDKGASITQLGFTTNFSAYQSVKETW). Asn-296 carries N-linked (GlcNAc...) asparagine glycosylation. The helical transmembrane segment at 308 to 328 (LAALIVLAVLEGILLLMLIFL) threads the bilayer. Residues 329–356 (RQRIRIAIALLKEASRAVGQMMSTMFYP) are Cytoplasmic-facing. The helical transmembrane segment at 357–377 (LVTFVLLVICIGYWAVTALYL) threads the bilayer. Topologically, residues 378 to 452 (ATSGQPQYIY…GVLGLFWTVN (75 aa)) are extracellular. 3 N-linked (GlcNAc...) asparagine glycosylation sites follow: Asn-391, Asn-403, and Asn-413. Residues 453 to 473 (WVLALGQCVLAGAFASFYWAF) traverse the membrane as a helical segment. At 474–498 (HKPRDIPTFPLSSAFIRTLRYHTGS) the chain is on the cytoplasmic side. The chain crosses the membrane as a helical span at residues 499-519 (LAFGALILSLVQIARVILEYI). At 520–557 (DHKLRGSQNPVARCIICCFKCCLWCLEKFIKFLNRNAY) the chain is on the extracellular side. The helical transmembrane segment at 558–578 (IMIAIYGKNFCVSAKNAFMLL) threads the bilayer. The Cytoplasmic segment spans residues 579–594 (MRNVLRVVVLDKVTDL). A helical transmembrane segment spans residues 595–615 (LLFFGKLLVVGGVGVLSFFFF). Over 616 to 635 (SGRIKGLGKDFENPNLNYYW) the chain is Extracellular. A helical membrane pass occupies residues 636–656 (LPIMTSIMGAYVIASGFFSVF). At 657 to 707 (GMCVDTLFLCFLEDLERNDGSQERPYYMPKALLKILGKKNEAPTGGKTRKK) the chain is on the cytoplasmic side.

It belongs to the CTL (choline transporter-like) family. In terms of processing, N-glycosylated; N-glycosylation of Asn-67 and Asn-391 is required for a proper thiamine pyrophosphate uptake. Expressed in colon and cecum.

Its subcellular location is the membrane. The protein resides in the apical cell membrane. The enzyme catalyses choline(out) + n H(+)(in) = choline(in) + n H(+)(out). It carries out the reaction thiamine diphosphate(out) = thiamine diphosphate(in). In terms of biological role, choline transporter that plays a role in the choline-acetylcholine system and is required to the efferent innervation of hair cells in the olivocochlear bundle for the maintenance of physiological function of outer hair cells and the protection of hair cells from acoustic injury. Also described as a thiamine pyrophosphate transporter in colon, may mediate the absorption of microbiota-generated thiamine pyrophosphate and contribute to host thiamine (vitamin B1) homeostasis. The sequence is that of Choline transporter-like protein 4 from Mus musculus (Mouse).